A 443-amino-acid chain; its full sequence is Glutamyl-tRNA reductase (443 aa).

Substrate is bound by residues 49-52 (TCNR), Ser-109, 114-116 (ETQ), and Gln-120. Catalysis depends on Cys-50, which acts as the Nucleophile. Residue 189 to 194 (GAGEMS) participates in NADP(+) binding.

It belongs to the glutamyl-tRNA reductase family. Homodimer.

The catalysed reaction is (S)-4-amino-5-oxopentanoate + tRNA(Glu) + NADP(+) = L-glutamyl-tRNA(Glu) + NADPH + H(+). It functions in the pathway porphyrin-containing compound metabolism; protoporphyrin-IX biosynthesis; 5-aminolevulinate from L-glutamyl-tRNA(Glu): step 1/2. In terms of biological role, catalyzes the NADPH-dependent reduction of glutamyl-tRNA(Glu) to glutamate 1-semialdehyde (GSA). The polypeptide is Glutamyl-tRNA reductase (Desulfitobacterium hafniense (strain DSM 10664 / DCB-2)).